The chain runs to 523 residues: Probable E3 ubiquitin-protein ligase ZFP1 (523 aa).

Basic and acidic residues predominate over residues 18–28 (EQGHSHIHSES). Positions 18–43 (EQGHSHIHSESFNRTGNDSSDQGAQH) are disordered. Residues 29 to 40 (FNRTGNDSSDQG) are compositionally biased toward polar residues. Residues 471–512 (CIICQEEYQVKECIGTLDCGHRYHEDCIKQWLMVKNLCPICK) form an RING-type; atypical zinc finger.

This sequence belongs to the RING-type zinc finger family. In terms of assembly, interacts with DJA6.

The catalysed reaction is S-ubiquitinyl-[E2 ubiquitin-conjugating enzyme]-L-cysteine + [acceptor protein]-L-lysine = [E2 ubiquitin-conjugating enzyme]-L-cysteine + N(6)-ubiquitinyl-[acceptor protein]-L-lysine.. The protein operates within protein modification; protein ubiquitination. In terms of biological role, probable E3 ubiquitin-protein ligase. This is Probable E3 ubiquitin-protein ligase ZFP1 from Oryza sativa subsp. japonica (Rice).